The sequence spans 631 residues: Phosphomethylpyrimidine synthase (631 aa).

Substrate contacts are provided by residues Asn239, Met268, Tyr297, His333, 353–355 (SRG), 394–397 (DGLR), and Glu433. Residue His437 coordinates Zn(2+). Tyr460 provides a ligand contact to substrate. His501 is a Zn(2+) binding site. [4Fe-4S] cluster-binding residues include Cys581, Cys584, and Cys589.

It belongs to the ThiC family. As to quaternary structure, homodimer. It depends on [4Fe-4S] cluster as a cofactor.

It catalyses the reaction 5-amino-1-(5-phospho-beta-D-ribosyl)imidazole + S-adenosyl-L-methionine = 4-amino-2-methyl-5-(phosphooxymethyl)pyrimidine + CO + 5'-deoxyadenosine + formate + L-methionine + 3 H(+). It functions in the pathway cofactor biosynthesis; thiamine diphosphate biosynthesis. Catalyzes the synthesis of the hydroxymethylpyrimidine phosphate (HMP-P) moiety of thiamine from aminoimidazole ribotide (AIR) in a radical S-adenosyl-L-methionine (SAM)-dependent reaction. This Escherichia coli O8 (strain IAI1) protein is Phosphomethylpyrimidine synthase.